The primary structure comprises 537 residues: tRNA(His) guanylyltransferase 2 (537 aa).

3 residues coordinate Mg(2+): D307, G308, and D354. GTP contacts are provided by residues 307-312 and 353-354; these read DGCHFH and SD.

The protein belongs to the tRNA(His) guanylyltransferase family. Requires Mg(2+) as cofactor.

It localises to the nucleus. The protein resides in the nucleoplasm. It carries out the reaction a 5'-end ribonucleotide-tRNA(His) + GTP + ATP + H2O = a 5'-end phospho-guanosine-ribonucleotide-tRNA(His) + AMP + 2 diphosphate + H(+). Functionally, adds a GMP to the 5'-end of tRNA(His) after transcription and RNase P cleavage. The chain is tRNA(His) guanylyltransferase 2 (THG2) from Arabidopsis thaliana (Mouse-ear cress).